Consider the following 138-residue polypeptide: Ribulose bisphosphate carboxylase small subunit (138 aa).

The protein belongs to the RuBisCO small chain family. As to quaternary structure, heterohexadecamer of 8 large and 8 small subunits.

It localises to the plastid. Its subcellular location is the chloroplast. In terms of biological role, ruBisCO catalyzes two reactions: the carboxylation of D-ribulose 1,5-bisphosphate, the primary event in carbon dioxide fixation, as well as the oxidative fragmentation of the pentose substrate in the photorespiration process. Both reactions occur simultaneously and in competition at the same active site. Although the small subunit is not catalytic it is essential for maximal activity. This Antithamnion sp. (Red alga) protein is Ribulose bisphosphate carboxylase small subunit.